Here is a 288-residue protein sequence, read N- to C-terminus: UTP--glucose-1-phosphate uridylyltransferase (288 aa).

This sequence belongs to the UDPGP type 2 family.

It carries out the reaction alpha-D-glucose 1-phosphate + UTP + H(+) = UDP-alpha-D-glucose + diphosphate. Its pathway is glycolipid metabolism; diglucosyl-diacylglycerol biosynthesis. In terms of biological role, catalyzes the formation of UDP-glucose from glucose-1-phosphate and UTP. This is an intermediate step in the biosynthesis of diglucosyl-diacylglycerol (Glc2-DAG), i.e. the predominant glycolipid found in the S.aureus membrane, which is also used as a membrane anchor for lipoteichoic acid (LTA). This is UTP--glucose-1-phosphate uridylyltransferase (gtaB) from Staphylococcus aureus (strain MSSA476).